The chain runs to 671 residues: UBA domain-containing protein RUP1 (671 aa).

The region spanning 1 to 41 (MMDNQAVKSLLEMGIPHEVAVDALQRTGGNLEAAVNFIFSN) is the UBA domain. Phosphoserine is present on Ser-56. A disordered region spans residues 68-87 (GTKPCDVPNNGDQDIDMPDV). Residues 432 to 501 (SKRKQARTRS…LNSARAAKME (70 aa)) are a coiled coil. Positions 643-671 (DGMGDPEQATNNINNGNDNDNDDDIDSDN) are disordered. Positions 661-671 (NDNDDDIDSDN) are enriched in acidic residues.

As to quaternary structure, forms a ternary complex with RSP5 and UBP2.

It localises to the cytoplasm. It is found in the nucleus. Functionally, modulates the activity of the RSP5 HECT ubiquitin-protein ligase through its mediation of the interaction between RSP5 and the deubiquitinase UBP2. Involved in regulation of cell wall homeostasis. The polypeptide is UBA domain-containing protein RUP1 (RUP1) (Saccharomyces cerevisiae (strain ATCC 204508 / S288c) (Baker's yeast)).